A 465-amino-acid polypeptide reads, in one-letter code: SHC-transforming protein 1 (465 aa).

Positions Met44–Glu227 constitute a PID domain. The CH1 stretch occupies residues Glu228–Pro369. The disordered stretch occupies residues Val281–Phe315. An SH2 domain is found at Trp370 to Val461.

In terms of assembly, interacts with grb2. In terms of tissue distribution, highly expressed in oocytes and embryo. Also expressed in liver. Detected in ovary, testis and heart and to a lesser extent in liver (at protein level).

It localises to the cytoplasm. Functionally, implicated in ras-dependent oocyte maturation induced by insulin/IGF1. This Xenopus laevis (African clawed frog) protein is SHC-transforming protein 1 (shc1).